We begin with the raw amino-acid sequence, 196 residues long: Late protein I196L (196 aa).

2 consecutive repeat copies span residues 28–48 (SIYLTTAISNNISTTISPTTS) and 49–70 (SNSLTTAISNNTSTTISPTTTS). Residues 71–92 (SNYLTSAISTNISDKEEDTPFS) form a 3; approximate repeat.

It belongs to the asfivirus I196L family.

This is Late protein I196L from African swine fever virus (isolate Warthog/Namibia/Wart80/1980) (ASFV).